A 117-amino-acid polypeptide reads, in one-letter code: Large ribosomal subunit protein bL20c (117 aa).

It belongs to the bacterial ribosomal protein bL20 family.

It localises to the plastid. Its function is as follows. Binds directly to 23S ribosomal RNA and is necessary for the in vitro assembly process of the 50S ribosomal subunit. It is not involved in the protein synthesizing functions of that subunit. This is Large ribosomal subunit protein bL20c (rpl20) from Euglena longa (Euglenophycean alga).